A 122-amino-acid chain; its full sequence is Large ribosomal subunit protein uL14 (122 aa).

The protein belongs to the universal ribosomal protein uL14 family. In terms of assembly, part of the 50S ribosomal subunit. Forms a cluster with proteins L3 and L19. In the 70S ribosome, L14 and L19 interact and together make contacts with the 16S rRNA in bridges B5 and B8.

Its function is as follows. Binds to 23S rRNA. Forms part of two intersubunit bridges in the 70S ribosome. This is Large ribosomal subunit protein uL14 from Burkholderia vietnamiensis (strain G4 / LMG 22486) (Burkholderia cepacia (strain R1808)).